The primary structure comprises 661 residues: UvrABC system protein B (661 aa).

Residues 25-182 (AGLSSKKRSQ…NDLINLQYER (158 aa)) enclose the Helicase ATP-binding domain. 38–45 (GITGSGKT) lines the ATP pocket. The Beta-hairpin motif lies at 91-114 (YYDYYQPEAYIARTDTFIEKDSSI). The 163-residue stretch at 430-592 (QIEDLISEIQ…IIPKTINRTI (163 aa)) folds into the Helicase C-terminal domain. Residues 621 to 656 (KTHIDKLKKEMLKAASNLEFEQAAKLRDQLKTLEEA) form the UVR domain.

The protein belongs to the UvrB family. In terms of assembly, forms a heterotetramer with UvrA during the search for lesions. Interacts with UvrC in an incision complex.

It localises to the cytoplasm. Its function is as follows. The UvrABC repair system catalyzes the recognition and processing of DNA lesions. A damage recognition complex composed of 2 UvrA and 2 UvrB subunits scans DNA for abnormalities. Upon binding of the UvrA(2)B(2) complex to a putative damaged site, the DNA wraps around one UvrB monomer. DNA wrap is dependent on ATP binding by UvrB and probably causes local melting of the DNA helix, facilitating insertion of UvrB beta-hairpin between the DNA strands. Then UvrB probes one DNA strand for the presence of a lesion. If a lesion is found the UvrA subunits dissociate and the UvrB-DNA preincision complex is formed. This complex is subsequently bound by UvrC and the second UvrB is released. If no lesion is found, the DNA wraps around the other UvrB subunit that will check the other stand for damage. This Rickettsia massiliae (strain Mtu5) protein is UvrABC system protein B.